A 378-amino-acid polypeptide reads, in one-letter code: Putative methyltransferase spot-1 (378 aa).

It belongs to the class IV-like SAM-binding methyltransferase superfamily.

Its subcellular location is the cytoplasm. It localises to the cytoskeleton. It is found in the spindle. The protein localises to the chromosome. The protein resides in the centromere. Its subcellular location is the kinetochore. It localises to the microtubule organizing center. It is found in the centrosome. Functionally, required for association of the centrosomes with the poles of the bipolar mitotic spindle during metaphase. The chain is Putative methyltransferase spot-1 from Caenorhabditis elegans.